A 153-amino-acid chain; its full sequence is Prostaglandin E synthase (153 aa).

Residues 1 to 13 (MPSPGLVMESGQV) lie on the Lumenal side of the membrane. The chain crosses the membrane as a helical span at residues 14–42 (LPAFLLCSTLLVIKMYAVAVITGQMRLRK). R39 contacts glutathione. At 43–61 (KAFANPEDALKRGGLQYYR) the chain is on the cytoplasmic side. A helical membrane pass occupies residues 62–91 (SDPDVERCLRAHRNDMETIYPFLFLGFVYS). Position 74-78 (74-78 (RNDME)) interacts with glutathione. The Lumenal portion of the chain corresponds to 92–96 (FLGPN). The chain crosses the membrane as a helical span at residues 97-120 (PLIAWIHFLVVLTGRVVHTVAYLG). The glutathione site is built by H114 and Y118. Residues 121 to 124 (KLNP) are Cytoplasmic-facing. A helical membrane pass occupies residues 125–153 (RLRSGAYVLAQFSCFSMALQILWEVAHHL). Residue 127 to 131 (RSGAY) participates in glutathione binding.

This sequence belongs to the MAPEG family. In terms of assembly, homotrimer. Glutathione is required as a cofactor.

The protein localises to the membrane. The protein resides in the cytoplasm. It is found in the perinuclear region. The enzyme catalyses prostaglandin H2 = prostaglandin E2. The catalysed reaction is 2-glyceryl-prostaglandin H2 = 2-glyceryl-prostaglandin E2. It catalyses the reaction prostaglandin G2 = (15S)-15-hydroperoxy-prostaglandin E2. It carries out the reaction 1-chloro-2,4-dinitrobenzene + glutathione = 2,4-dinitrophenyl-S-glutathione + chloride + H(+). The enzyme catalyses (5S)-hydroperoxy-(6E,8Z,11Z,14Z)-eicosatetraenoate + 2 glutathione = (5S)-hydroxy-(6E,8Z,11Z,14Z)-eicosatetraenoate + glutathione disulfide + H2O. It functions in the pathway lipid metabolism; prostaglandin biosynthesis. With respect to regulation, activity is increased markedly in macrophages and osteoblasts following pro-inflammatory stimuli. In terms of biological role, terminal enzyme of the cyclooxygenase (COX)-2-mediated prostaglandin E2 (PGE2) biosynthetic pathway. Catalyzes the glutathione-dependent oxidoreduction of prostaglandin endoperoxide H2 (PGH2) to prostaglandin E2 (PGE2) in response to inflammatory stimuli. Plays a key role in inflammation response, fever and pain. Also catalyzes the oxidoreduction of endocannabinoids into prostaglandin glycerol esters and PGG2 into 15-hydroperoxy-PGE2. In addition, displays low glutathione transferase and glutathione-dependent peroxidase activities, toward 1-chloro-2,4-dinitrobenzene and 5-hydroperoxyicosatetraenoic acid (5-HPETE), respectively. The polypeptide is Prostaglandin E synthase (Ptges) (Mus musculus (Mouse)).